We begin with the raw amino-acid sequence, 287 residues long: Shikimate kinase 3, chloroplastic (287 aa).

The N-terminal 57 residues, 1–57, are a transit peptide targeting the chloroplast; it reads MDAGVGLRAKPGAWAGLGNPRRSSTARVPVRFAVEKFAQPLVLGSDRRSCGAKLKVS. ATP is bound at residue 98 to 105; the sequence is GMMGSGKT. T105 contributes to the Mg(2+) binding site. Positions 123, 148, and 170 each coordinate substrate. R209 serves as a coordination point for ATP.

The protein belongs to the shikimate kinase family. Mg(2+) serves as cofactor. In terms of tissue distribution, expressed in panicles.

It localises to the plastid. The protein resides in the chloroplast. The enzyme catalyses shikimate + ATP = 3-phosphoshikimate + ADP + H(+). It functions in the pathway metabolic intermediate biosynthesis; chorismate biosynthesis; chorismate from D-erythrose 4-phosphate and phosphoenolpyruvate: step 5/7. Functionally, catalyzes the specific phosphorylation of the 3-hydroxyl group of shikimic acid using ATP as a cosubstrate. The polypeptide is Shikimate kinase 3, chloroplastic (SK3) (Oryza sativa subsp. japonica (Rice)).